We begin with the raw amino-acid sequence, 545 residues long: Putative serine/threonine-protein kinase L673 (545 aa).

The Cyclin N-terminal domain occupies 13–125 (RLGLVNWMLN…YKVYYLTIWK (113 aa)). Residues 264-543 (IDFQNKLGSG…NCLKKIKESF (280 aa)) form the Protein kinase domain. ATP contacts are provided by residues 270–278 (LGSGTYGSV) and Lys-291. Asp-384 (proton acceptor) is an active-site residue.

The protein belongs to the protein kinase superfamily. Ser/Thr protein kinase family.

It catalyses the reaction L-seryl-[protein] + ATP = O-phospho-L-seryl-[protein] + ADP + H(+). The enzyme catalyses L-threonyl-[protein] + ATP = O-phospho-L-threonyl-[protein] + ADP + H(+). This chain is Putative serine/threonine-protein kinase L673, found in Acanthamoeba polyphaga (Amoeba).